We begin with the raw amino-acid sequence, 253 residues long: Imidazole glycerol phosphate synthase subunit HisF (253 aa).

Catalysis depends on residues Asp11 and Asp130.

The protein belongs to the HisA/HisF family. As to quaternary structure, heterodimer of HisH and HisF.

The protein resides in the cytoplasm. It carries out the reaction 5-[(5-phospho-1-deoxy-D-ribulos-1-ylimino)methylamino]-1-(5-phospho-beta-D-ribosyl)imidazole-4-carboxamide + L-glutamine = D-erythro-1-(imidazol-4-yl)glycerol 3-phosphate + 5-amino-1-(5-phospho-beta-D-ribosyl)imidazole-4-carboxamide + L-glutamate + H(+). Its pathway is amino-acid biosynthesis; L-histidine biosynthesis; L-histidine from 5-phospho-alpha-D-ribose 1-diphosphate: step 5/9. Functionally, IGPS catalyzes the conversion of PRFAR and glutamine to IGP, AICAR and glutamate. The HisF subunit catalyzes the cyclization activity that produces IGP and AICAR from PRFAR using the ammonia provided by the HisH subunit. The chain is Imidazole glycerol phosphate synthase subunit HisF from Clostridium botulinum (strain Alaska E43 / Type E3).